The sequence spans 357 residues: Anthranilate phosphoribosyltransferase (357 aa).

5-phospho-alpha-D-ribose 1-diphosphate contacts are provided by residues Gly-94, Gly-97 to Asp-98, Thr-102, Asn-104 to Thr-107, Lys-122 to Ser-130, and Gly-134. Gly-94 contacts anthranilate. Ser-106 lines the Mg(2+) pocket. Asn-125 provides a ligand contact to anthranilate. Position 180 (Arg-180) interacts with anthranilate. Mg(2+)-binding residues include Asp-238 and Glu-239.

Belongs to the anthranilate phosphoribosyltransferase family. As to quaternary structure, homodimer. Mg(2+) is required as a cofactor.

The catalysed reaction is N-(5-phospho-beta-D-ribosyl)anthranilate + diphosphate = 5-phospho-alpha-D-ribose 1-diphosphate + anthranilate. It participates in amino-acid biosynthesis; L-tryptophan biosynthesis; L-tryptophan from chorismate: step 2/5. Functionally, catalyzes the transfer of the phosphoribosyl group of 5-phosphorylribose-1-pyrophosphate (PRPP) to anthranilate to yield N-(5'-phosphoribosyl)-anthranilate (PRA). The chain is Anthranilate phosphoribosyltransferase from Mycobacterium sp. (strain KMS).